The primary structure comprises 472 residues: MDTKQIWFTTLGTLQNQILRYDYDTWLKTTALVSVANDLAVIGAPNVTTKQVIEDRFMSVLRRALGEVLGYQVNVRVIISSATPAPSEPVAVTPSEPSPTTEVAEPSFASFNQAAPMLNQLPLGDPNRSSVLNPRYTFSSFIVGTSNRLAHAACMAVAEHPAQAYNPLFLYGGVGLGKTHLLQAIGNYALDRNPEVNVLYVSSEKFTNDLINAIRRQQTEEFRIRYRNIDILLIDDIQFIAGKEGTQEEFFHTFNTLHGAGKQIVLSSDRPPKAILTLEERLRSRFEWGLIVDVQNPDLETRTAILRAKGETLQVPVSSEVIDFLAQRIQSNIRELEGCLNRVIAYANLNRTPVTVEVASAALADLLDTSRRKRVTADDIFREVSQHYGIDQRAIRGRGRSRNVVLPRQVVMYLLREETDASLVEIGELLGGRDHTTVMHGYNKITDDLTSDARLRNDITSLRQRLYGENAR.

Residues 1–80 are domain I, interacts with DnaA modulators; the sequence is MDTKQIWFTT…YQVNVRVIIS (80 aa). Residues 80–130 are domain II; the sequence is SSATPAPSEPVAVTPSEPSPTTEVAEPSFASFNQAAPMLNQLPLGDPNRSS. The tract at residues 131–347 is domain III, AAA+ region; sequence VLNPRYTFSS…GCLNRVIAYA (217 aa). Positions 175, 177, 178, and 179 each coordinate ATP. The interval 348–472 is domain IV, binds dsDNA; it reads NLNRTPVTVE…RQRLYGENAR (125 aa).

The protein belongs to the DnaA family. In terms of assembly, oligomerizes as a right-handed, spiral filament on DNA at oriC.

Its subcellular location is the cytoplasm. Plays an essential role in the initiation and regulation of chromosomal replication. ATP-DnaA binds to the origin of replication (oriC) to initiate formation of the DNA replication initiation complex once per cell cycle. Binds the DnaA box (a 9 base pair repeat at the origin) and separates the double-stranded (ds)DNA. Forms a right-handed helical filament on oriC DNA; dsDNA binds to the exterior of the filament while single-stranded (ss)DNA is stabiized in the filament's interior. The ATP-DnaA-oriC complex binds and stabilizes one strand of the AT-rich DNA unwinding element (DUE), permitting loading of DNA polymerase. After initiation quickly degrades to an ADP-DnaA complex that is not apt for DNA replication. Binds acidic phospholipids. The polypeptide is Chromosomal replication initiator protein DnaA (Herpetosiphon aurantiacus (strain ATCC 23779 / DSM 785 / 114-95)).